We begin with the raw amino-acid sequence, 417 residues long: Gamma-glutamyl phosphate reductase (417 aa).

The protein belongs to the gamma-glutamyl phosphate reductase family.

The protein resides in the cytoplasm. It catalyses the reaction L-glutamate 5-semialdehyde + phosphate + NADP(+) = L-glutamyl 5-phosphate + NADPH + H(+). The protein operates within amino-acid biosynthesis; L-proline biosynthesis; L-glutamate 5-semialdehyde from L-glutamate: step 2/2. Functionally, catalyzes the NADPH-dependent reduction of L-glutamate 5-phosphate into L-glutamate 5-semialdehyde and phosphate. The product spontaneously undergoes cyclization to form 1-pyrroline-5-carboxylate. This chain is Gamma-glutamyl phosphate reductase, found in Sodalis glossinidius (strain morsitans).